The primary structure comprises 302 residues: Phosphatidylglycerol--prolipoprotein diacylglyceryl transferase (302 aa).

3 helical membrane passes run 26–46 (WYALAYVVGILLGWRYAVMLV), 67–87 (LVLWITLGIILGGRIGYVLFY), and 108–128 (IWEGGMSFHGGFLGVCAAIVL). A 1,2-diacyl-sn-glycero-3-phospho-(1'-sn-glycerol) is bound at residue R156. 2 helical membrane passes run 231-251 (GALVATFLICYGLFRVSLEGV) and 263-283 (LGLTMGMILSIPMLAVGVWLL).

The protein belongs to the Lgt family.

It localises to the cell inner membrane. It carries out the reaction L-cysteinyl-[prolipoprotein] + a 1,2-diacyl-sn-glycero-3-phospho-(1'-sn-glycerol) = an S-1,2-diacyl-sn-glyceryl-L-cysteinyl-[prolipoprotein] + sn-glycerol 1-phosphate + H(+). It participates in protein modification; lipoprotein biosynthesis (diacylglyceryl transfer). Its function is as follows. Catalyzes the transfer of the diacylglyceryl group from phosphatidylglycerol to the sulfhydryl group of the N-terminal cysteine of a prolipoprotein, the first step in the formation of mature lipoproteins. The polypeptide is Phosphatidylglycerol--prolipoprotein diacylglyceryl transferase (Caulobacter sp. (strain K31)).